Reading from the N-terminus, the 178-residue chain is Thymidine kinase (178 aa).

ATP is bound at residue 13-20 (GPMFAGKS). The active-site Proton acceptor is the E85. Residue F115 coordinates substrate. Zn(2+) contacts are provided by C140 and C143. 159-163 (IEIIG) contributes to the substrate binding site. C172 and C175 together coordinate Zn(2+).

The protein belongs to the thymidine kinase family.

The catalysed reaction is thymidine + ATP = dTMP + ADP + H(+). This is Thymidine kinase (TK) from Myxoma virus (strain Lausanne) (MYXV).